We begin with the raw amino-acid sequence, 155 residues long: Deoxyuridine 5'-triphosphate nucleotidohydrolase (155 aa).

Residues 74–76 (RSG), Asn-87, and 91–93 (LID) contribute to the substrate site.

Belongs to the dUTPase family. Mg(2+) serves as cofactor.

It catalyses the reaction dUTP + H2O = dUMP + diphosphate + H(+). It participates in pyrimidine metabolism; dUMP biosynthesis; dUMP from dCTP (dUTP route): step 2/2. Its function is as follows. This enzyme is involved in nucleotide metabolism: it produces dUMP, the immediate precursor of thymidine nucleotides and it decreases the intracellular concentration of dUTP so that uracil cannot be incorporated into DNA. In Xylella fastidiosa (strain M12), this protein is Deoxyuridine 5'-triphosphate nucleotidohydrolase.